Consider the following 611-residue polypeptide: MPPYRSRTTTHGRNMAGARGLWRATGMKDEDFGKPIIAVVNSFTQFVPGHVHLKDLGQLVAREIESAGGVAKEFNTIAVDDGIAMGHDGMLYSLPSRELIADSVEYMVNAHCADAMVCISNCDKITPGMLMAALRLNIPVVFVSGGPMEAGKVVWDDQVKKLDLVDAMVAAADDSYTDDQVKAIERSACPTCGSCSGMFTANSMNCLTEALGLSLPGNGSTLATHADRKRLFVEAGHLVVDLARRYYEQDDESVLPRSIASFPAFENAMTLDIAMGGSTNTVLHLLAAAQEAEIDFTMADIDRLSRRVPVLCKVAPANNTVHMEDVHRAGGIMGILGQLDKAGLINTDLPTVHSETVAKALDHWDVTRTNSDMVHKFYSAAPGGVPTQVAFSQERRFDSVDTDREKGVIRSKEHAFSQDGGLAVLYGNLAEDGCIVKTAGVDDSILKFSGPARIFESQDTAVLGILNGKIKAGDIVLIRYEGPRGGPGMQEMLYPTSYLKSKGLGKACALITDGRFSGGSSGLSIGHVSPEAAEGGTIGLVREGDIIDIDIPNRKIHLAVDDATLAERRAEQEETGWKPAETRKRKISTALKAYASMATSAAKGAVRKLPD.

Asp81 serves as a coordination point for Mg(2+). A [2Fe-2S] cluster-binding site is contributed by Cys122. 2 residues coordinate Mg(2+): Asp123 and Lys124. N6-carboxylysine is present on Lys124. A [2Fe-2S] cluster-binding site is contributed by Cys195. Glu491 is a Mg(2+) binding site. The Proton acceptor role is filled by Ser517.

Belongs to the IlvD/Edd family. In terms of assembly, homodimer. Requires [2Fe-2S] cluster as cofactor. It depends on Mg(2+) as a cofactor.

It catalyses the reaction (2R)-2,3-dihydroxy-3-methylbutanoate = 3-methyl-2-oxobutanoate + H2O. It carries out the reaction (2R,3R)-2,3-dihydroxy-3-methylpentanoate = (S)-3-methyl-2-oxopentanoate + H2O. The protein operates within amino-acid biosynthesis; L-isoleucine biosynthesis; L-isoleucine from 2-oxobutanoate: step 3/4. It functions in the pathway amino-acid biosynthesis; L-valine biosynthesis; L-valine from pyruvate: step 3/4. Functions in the biosynthesis of branched-chain amino acids. Catalyzes the dehydration of (2R,3R)-2,3-dihydroxy-3-methylpentanoate (2,3-dihydroxy-3-methylvalerate) into 2-oxo-3-methylpentanoate (2-oxo-3-methylvalerate) and of (2R)-2,3-dihydroxy-3-methylbutanoate (2,3-dihydroxyisovalerate) into 2-oxo-3-methylbutanoate (2-oxoisovalerate), the penultimate precursor to L-isoleucine and L-valine, respectively. This is Dihydroxy-acid dehydratase from Brucella anthropi (strain ATCC 49188 / DSM 6882 / CCUG 24695 / JCM 21032 / LMG 3331 / NBRC 15819 / NCTC 12168 / Alc 37) (Ochrobactrum anthropi).